The following is an 837-amino-acid chain: Protein translocase subunit SecA 1 (837 aa).

Residues glutamine 85, 103-107 (GEGKT), and aspartate 492 contribute to the ATP site. The segment covering 787–806 (QEVAKGEAVHPKEDGEEPKK) has biased composition (basic and acidic residues). The disordered stretch occupies residues 787–813 (QEVAKGEAVHPKEDGEEPKKKPIRKAV). The Zn(2+) site is built by cysteine 821, cysteine 823, cysteine 832, and cysteine 833.

Belongs to the SecA family. Monomer and homodimer. Part of the essential Sec protein translocation apparatus which comprises SecA, SecYEG and auxiliary proteins SecDF. Other proteins may also be involved. Zn(2+) serves as cofactor.

It is found in the cell membrane. It localises to the cytoplasm. The catalysed reaction is ATP + H2O + cellular proteinSide 1 = ADP + phosphate + cellular proteinSide 2.. In terms of biological role, part of the Sec protein translocase complex. Interacts with the SecYEG preprotein conducting channel. Has a central role in coupling the hydrolysis of ATP to the transfer of proteins into and across the cell membrane, serving as an ATP-driven molecular motor driving the stepwise translocation of polypeptide chains across the membrane. This is Protein translocase subunit SecA 1 from Geobacillus thermodenitrificans (strain NG80-2).